Here is a 475-residue protein sequence, read N- to C-terminus: Membrane-bound lytic murein transglycosylase F (475 aa).

The signal sequence occupies residues 1–15; that stretch reads MKKLLLILCCITLLA. Residues 16 to 258 form a non-LT domain region; the sequence is ACQKVVVEQE…HLNEKYFAHV (243 aa). An LT domain region spans residues 259–475; it reads KRFDYVDTRA…KTEAAQPQQP (217 aa). Glutamate 303 is an active-site residue.

This sequence in the N-terminal section; belongs to the bacterial solute-binding protein 3 family. It in the C-terminal section; belongs to the transglycosylase Slt family.

The protein localises to the cell outer membrane. It catalyses the reaction Exolytic cleavage of the (1-&gt;4)-beta-glycosidic linkage between N-acetylmuramic acid (MurNAc) and N-acetylglucosamine (GlcNAc) residues in peptidoglycan, from either the reducing or the non-reducing ends of the peptidoglycan chains, with concomitant formation of a 1,6-anhydrobond in the MurNAc residue.. Its function is as follows. Murein-degrading enzyme that degrades murein glycan strands and insoluble, high-molecular weight murein sacculi, with the concomitant formation of a 1,6-anhydromuramoyl product. Lytic transglycosylases (LTs) play an integral role in the metabolism of the peptidoglycan (PG) sacculus. Their lytic action creates space within the PG sacculus to allow for its expansion as well as for the insertion of various structures such as secretion systems and flagella. The sequence is that of Membrane-bound lytic murein transglycosylase F from Shewanella halifaxensis (strain HAW-EB4).